The following is a 475-amino-acid chain: Protein ABCI7, chloroplastic (475 aa).

The transit peptide at 1–36 (MAAATVLGRLSLIPNLSSKPKLKSNRRTTSTSVSVR) directs the protein to the chloroplast.

Interacts with NAP7.

The protein localises to the plastid. It localises to the chloroplast. The polypeptide is Protein ABCI7, chloroplastic (ABCI7) (Arabidopsis thaliana (Mouse-ear cress)).